A 211-amino-acid polypeptide reads, in one-letter code: Thiamine-phosphate synthase (211 aa).

4-amino-2-methyl-5-(diphosphooxymethyl)pyrimidine is bound by residues 41–45 (QYRDK) and Asn-73. Residues Asp-74 and Asp-93 each coordinate Mg(2+). Thr-112 is a 4-amino-2-methyl-5-(diphosphooxymethyl)pyrimidine binding site. A 2-[(2R,5Z)-2-carboxy-4-methylthiazol-5(2H)-ylidene]ethyl phosphate-binding site is contributed by 139–141 (SPT). Lys-142 is a 4-amino-2-methyl-5-(diphosphooxymethyl)pyrimidine binding site. Residues Gly-169 and 189–190 (VS) each bind 2-[(2R,5Z)-2-carboxy-4-methylthiazol-5(2H)-ylidene]ethyl phosphate.

This sequence belongs to the thiamine-phosphate synthase family. Mg(2+) serves as cofactor.

It carries out the reaction 2-[(2R,5Z)-2-carboxy-4-methylthiazol-5(2H)-ylidene]ethyl phosphate + 4-amino-2-methyl-5-(diphosphooxymethyl)pyrimidine + 2 H(+) = thiamine phosphate + CO2 + diphosphate. It catalyses the reaction 2-(2-carboxy-4-methylthiazol-5-yl)ethyl phosphate + 4-amino-2-methyl-5-(diphosphooxymethyl)pyrimidine + 2 H(+) = thiamine phosphate + CO2 + diphosphate. The catalysed reaction is 4-methyl-5-(2-phosphooxyethyl)-thiazole + 4-amino-2-methyl-5-(diphosphooxymethyl)pyrimidine + H(+) = thiamine phosphate + diphosphate. Its pathway is cofactor biosynthesis; thiamine diphosphate biosynthesis; thiamine phosphate from 4-amino-2-methyl-5-diphosphomethylpyrimidine and 4-methyl-5-(2-phosphoethyl)-thiazole: step 1/1. Its function is as follows. Condenses 4-methyl-5-(beta-hydroxyethyl)thiazole monophosphate (THZ-P) and 2-methyl-4-amino-5-hydroxymethyl pyrimidine pyrophosphate (HMP-PP) to form thiamine monophosphate (TMP). This is Thiamine-phosphate synthase from Thioalkalivibrio sulfidiphilus (strain HL-EbGR7).